A 69-amino-acid polypeptide reads, in one-letter code: ATP synthase protein 8 (69 aa).

The chain crosses the membrane as a helical span at residues 8–24 (TWTLTISLMIISLFCIY). An N6-acetyllysine; alternate modification is found at lysine 55. Lysine 55 is subject to N6-succinyllysine; alternate. Lysine 58 carries the N6-acetyllysine modification.

Belongs to the ATPase protein 8 family. F-type ATPases have 2 components, CF(1) - the catalytic core - and CF(0) - the membrane proton channel. Component of an ATP synthase complex composed of ATP5PB, ATP5MC1, ATP5F1E, ATP5PD, ATP5ME, ATP5PF, ATP5MF, MT-ATP6, MT-ATP8, ATP5F1A, ATP5F1B, ATP5F1D, ATP5F1C, ATP5PO, ATP5MG, ATP5MK and ATP5MJ. Interacts with PRICKLE3.

It localises to the mitochondrion membrane. In terms of biological role, mitochondrial membrane ATP synthase (F(1)F(0) ATP synthase or Complex V) produces ATP from ADP in the presence of a proton gradient across the membrane which is generated by electron transport complexes of the respiratory chain. F-type ATPases consist of two structural domains, F(1) - containing the extramembraneous catalytic core and F(0) - containing the membrane proton channel, linked together by a central stalk and a peripheral stalk. During catalysis, ATP synthesis in the catalytic domain of F(1) is coupled via a rotary mechanism of the central stalk subunits to proton translocation. Part of the complex F(0) domain. Minor subunit located with subunit a in the membrane. In Didelphis virginiana (North American opossum), this protein is ATP synthase protein 8 (MT-ATP8).